The following is a 193-amino-acid chain: Thymidine kinase (193 aa).

ATP-binding positions include 16 to 23 (GPMFSGKS) and 89 to 92 (DEIQ). Residue E90 is the Proton acceptor of the active site. The Zn(2+) site is built by C146, C149, C184, and C187.

It belongs to the thymidine kinase family. Homotetramer.

It localises to the cytoplasm. It catalyses the reaction thymidine + ATP = dTMP + ADP + H(+). The polypeptide is Thymidine kinase (Caldanaerobacter subterraneus subsp. tengcongensis (strain DSM 15242 / JCM 11007 / NBRC 100824 / MB4) (Thermoanaerobacter tengcongensis)).